The chain runs to 401 residues: Coenzyme A biosynthesis bifunctional protein CoaBC (401 aa).

The tract at residues 1 to 190 (MQTLAGKKIL…FQPKPLQDKS (190 aa)) is phosphopantothenoylcysteine decarboxylase. Cysteine 159 functions as the Proton donor in the catalytic mechanism. The interval 191–401 (ILITAGPTRE…LKQIQTLMGH (211 aa)) is phosphopantothenate--cysteine ligase. CTP-binding positions include aspartate 279, lysine 289, 307–310 (PDIV), phenylalanine 326, lysine 340, and lysine 344.

It in the N-terminal section; belongs to the HFCD (homo-oligomeric flavin containing Cys decarboxylase) superfamily. In the C-terminal section; belongs to the PPC synthetase family. Mg(2+) serves as cofactor. It depends on FMN as a cofactor.

It carries out the reaction N-[(R)-4-phosphopantothenoyl]-L-cysteine + H(+) = (R)-4'-phosphopantetheine + CO2. The enzyme catalyses (R)-4'-phosphopantothenate + L-cysteine + CTP = N-[(R)-4-phosphopantothenoyl]-L-cysteine + CMP + diphosphate + H(+). It participates in cofactor biosynthesis; coenzyme A biosynthesis; CoA from (R)-pantothenate: step 2/5. It functions in the pathway cofactor biosynthesis; coenzyme A biosynthesis; CoA from (R)-pantothenate: step 3/5. In terms of biological role, catalyzes two sequential steps in the biosynthesis of coenzyme A. In the first step cysteine is conjugated to 4'-phosphopantothenate to form 4-phosphopantothenoylcysteine. In the second step the latter compound is decarboxylated to form 4'-phosphopantotheine. The polypeptide is Coenzyme A biosynthesis bifunctional protein CoaBC (Vibrio vulnificus (strain YJ016)).